The chain runs to 124 residues: Fluoride-specific ion channel FluC (124 aa).

Helical transmembrane passes span 4–24, 35–55, 60–80, and 102–122; these read LLLV…ISIF, FGTL…YALG, ISPE…TTFS, and VVLN…LVFS. Residues Gly74 and Thr77 each coordinate Na(+).

It belongs to the fluoride channel Fluc/FEX (TC 1.A.43) family.

The protein resides in the cell inner membrane. It carries out the reaction fluoride(in) = fluoride(out). Na(+) is not transported, but it plays an essential structural role and its presence is essential for fluoride channel function. Fluoride-specific ion channel. Important for reducing fluoride concentration in the cell, thus reducing its toxicity. In Shewanella baltica (strain OS223), this protein is Fluoride-specific ion channel FluC.